Consider the following 313-residue polypeptide: MDNVLVIIGPTASGKTKLAIEIAKRANGEIISADSMQIYKYMDIGTAKPDEEEKEGIKHYLIDEVTPDEEFSVARFKELALKYIDEILSKGKLPIVAGGTGLYINSLIYNLEFSDTICDWELRKKLEQEAKEKGNEYLHNKLKEIDPKAAEKIHMNNVKRVIRAIEVYTYTKKPISVHQEESRKNPPRHNFILIGITMDREKLYDRINKRVDLMLEKGLVKEVEKLVEMGYDKSTIAMQGLGYKEILSYLRGERSLDEAVEILKRDTRRYAKRQMTWFRKIENVYWINKDEFDSDEKIIKNLKYYLATFGIFL.

9 to 16 (GPTASGKT) contributes to the ATP binding site. Substrate is bound at residue 11 to 16 (TASGKT). The tract at residues 34 to 37 (DSMQ) is interaction with substrate tRNA.

It belongs to the IPP transferase family. In terms of assembly, monomer. Requires Mg(2+) as cofactor.

It carries out the reaction adenosine(37) in tRNA + dimethylallyl diphosphate = N(6)-dimethylallyladenosine(37) in tRNA + diphosphate. Its function is as follows. Catalyzes the transfer of a dimethylallyl group onto the adenine at position 37 in tRNAs that read codons beginning with uridine, leading to the formation of N6-(dimethylallyl)adenosine (i(6)A). This Acetivibrio thermocellus (strain ATCC 27405 / DSM 1237 / JCM 9322 / NBRC 103400 / NCIMB 10682 / NRRL B-4536 / VPI 7372) (Clostridium thermocellum) protein is tRNA dimethylallyltransferase.